The primary structure comprises 68 residues: Protein transport protein Sec61 subunit gamma (68 aa).

Residues 1-32 (MDQVMAWVEPGKQFAKDSIRLVKRCTKPDRKE) lie on the Cytoplasmic side of the membrane. Residues 33 to 61 (FQKIAVATAIGFAIMGFIGFFVKLIHIPI) form a helical membrane-spanning segment. The Extracellular portion of the chain corresponds to 62-68 (NNIIVGS).

This sequence belongs to the SecE/SEC61-gamma family. Heterotrimeric complex composed of SEC61-alpha, SEC61-beta and SEC61-gamma. Component of the ribosome-associated ER translocon complex.

The protein resides in the endoplasmic reticulum membrane. Functionally, necessary for protein translocation in the endoplasmic reticulum and multi-pass membrane protein biogenesis. The polypeptide is Protein transport protein Sec61 subunit gamma (SEC61G) (Ciona intestinalis (Transparent sea squirt)).